Here is a 475-residue protein sequence, read N- to C-terminus: PRAME family member 20 (475 aa).

The stretch at 97–124 is one LRR 1; degenerate repeat; the sequence is RWKLQVLDLQDVSENFWMVWSEAMARRC. Residues 179-203 form an LRR 2; degenerate repeat; it reads HLCCKKLKMLGMLFHNIRNILKTVN. Residues 204-230 form an LRR 3; degenerate repeat; sequence LDCIQEVEVNCNWTLPVLAEFTPYLGQ. One copy of the LRR 4; degenerate repeat lies at 231-265; sequence MRNLRKLVLSDIDSRYISPEQKKEFVTQFTTQFLK. 5 LRR repeats span residues 266-291, 292-323, 324-342, 348-375, and 376-400; these read LRCLQKLYMNSVSFLEGHLDQMLSCL, KTSLNILAITNCVLLESDLKHLSKYPSIGQLK, TLDLSGTRLANFSLVPLQV, AATLEYLDLDDCGIVDSQVNAILPALSR, and CFELTTFSFRGNPISTATLENLLCH.

This sequence belongs to the PRAME family.

The chain is PRAME family member 20 from Homo sapiens (Human).